The sequence spans 173 residues: Small ribosomal subunit protein uS5 (173 aa).

The region spanning 17 to 80 is the S5 DRBM domain; that stretch reads LREKMIAVNR…EESRRNMIKV (64 aa).

It belongs to the universal ribosomal protein uS5 family. Part of the 30S ribosomal subunit. Contacts proteins S4 and S8.

With S4 and S12 plays an important role in translational accuracy. Functionally, located at the back of the 30S subunit body where it stabilizes the conformation of the head with respect to the body. The protein is Small ribosomal subunit protein uS5 of Delftia acidovorans (strain DSM 14801 / SPH-1).